Here is a 186-residue protein sequence, read N- to C-terminus: Potassium-transporting ATPase KdpC subunit (186 aa).

A helical membrane pass occupies residues 10–30; sequence LTIITMVLCGFLFPLAITLIG.

This sequence belongs to the KdpC family. As to quaternary structure, the system is composed of three essential subunits: KdpA, KdpB and KdpC.

The protein resides in the cell membrane. In terms of biological role, part of the high-affinity ATP-driven potassium transport (or Kdp) system, which catalyzes the hydrolysis of ATP coupled with the electrogenic transport of potassium into the cytoplasm. This subunit acts as a catalytic chaperone that increases the ATP-binding affinity of the ATP-hydrolyzing subunit KdpB by the formation of a transient KdpB/KdpC/ATP ternary complex. In Staphylococcus aureus (strain MRSA252), this protein is Potassium-transporting ATPase KdpC subunit.